Reading from the N-terminus, the 365-residue chain is Chorismate synthase (365 aa).

Arginine 48 is a binding site for NADP(+). FMN contacts are provided by residues 125–127 (RSS), 238–239 (NA), glycine 278, 293–297 (KPTSS), and arginine 319.

Belongs to the chorismate synthase family. As to quaternary structure, homotetramer. Requires FMNH2 as cofactor.

The catalysed reaction is 5-O-(1-carboxyvinyl)-3-phosphoshikimate = chorismate + phosphate. It functions in the pathway metabolic intermediate biosynthesis; chorismate biosynthesis; chorismate from D-erythrose 4-phosphate and phosphoenolpyruvate: step 7/7. Functionally, catalyzes the anti-1,4-elimination of the C-3 phosphate and the C-6 proR hydrogen from 5-enolpyruvylshikimate-3-phosphate (EPSP) to yield chorismate, which is the branch point compound that serves as the starting substrate for the three terminal pathways of aromatic amino acid biosynthesis. This reaction introduces a second double bond into the aromatic ring system. The polypeptide is Chorismate synthase (Marinomonas sp. (strain MWYL1)).